Reading from the N-terminus, the 365-residue chain is tRNA-specific 2-thiouridylase MnmA (365 aa).

ATP is bound by residues 9–16 and Met35; that span reads AMSGGVDS. Catalysis depends on Cys105, which acts as the Nucleophile. The cysteines at positions 105 and 203 are disulfide-linked. Gly129 is an ATP binding site. The interval 153-155 is interaction with tRNA; sequence KDQ. Catalysis depends on Cys203, which acts as the Cysteine persulfide intermediate. An interaction with tRNA region spans residues 308–309; that stretch reads RY.

This sequence belongs to the MnmA/TRMU family.

Its subcellular location is the cytoplasm. It catalyses the reaction S-sulfanyl-L-cysteinyl-[protein] + uridine(34) in tRNA + AH2 + ATP = 2-thiouridine(34) in tRNA + L-cysteinyl-[protein] + A + AMP + diphosphate + H(+). Catalyzes the 2-thiolation of uridine at the wobble position (U34) of tRNA, leading to the formation of s(2)U34. In Pelotomaculum thermopropionicum (strain DSM 13744 / JCM 10971 / SI), this protein is tRNA-specific 2-thiouridylase MnmA.